Here is a 161-residue protein sequence, read N- to C-terminus: Allophycocyanin alpha subunit (161 aa).

(2R,3E)-phycocyanobilin is bound at residue Cys-81.

It belongs to the phycobiliprotein family. In terms of assembly, heterodimer of an alpha and a beta chain. In terms of processing, contains one covalently linked phycocyanobilin chromophore. The chromophore on position 81 is added by the phycocyanobilin lyase CpcUS.

Its subcellular location is the cellular thylakoid membrane. Functionally, light-harvesting photosynthetic bile pigment-protein from the phycobiliprotein complex. Allophycocyanin has a maximum absorption at approximately 650 nanometers. In Picosynechococcus sp. (strain ATCC 27264 / PCC 7002 / PR-6) (Agmenellum quadruplicatum), this protein is Allophycocyanin alpha subunit (apcA).